An 89-amino-acid chain; its full sequence is Small ribosomal subunit protein uS15 (89 aa).

It belongs to the universal ribosomal protein uS15 family. As to quaternary structure, part of the 30S ribosomal subunit. Forms a bridge to the 50S subunit in the 70S ribosome, contacting the 23S rRNA.

One of the primary rRNA binding proteins, it binds directly to 16S rRNA where it helps nucleate assembly of the platform of the 30S subunit by binding and bridging several RNA helices of the 16S rRNA. Its function is as follows. Forms an intersubunit bridge (bridge B4) with the 23S rRNA of the 50S subunit in the ribosome. In Rippkaea orientalis (strain PCC 8801 / RF-1) (Cyanothece sp. (strain PCC 8801)), this protein is Small ribosomal subunit protein uS15.